The chain runs to 178 residues: Large ribosomal subunit protein bL25 (178 aa).

It belongs to the bacterial ribosomal protein bL25 family. CTC subfamily. Part of the 50S ribosomal subunit; part of the 5S rRNA/L5/L18/L25 subcomplex. Contacts the 5S rRNA. Binds to the 5S rRNA independently of L5 and L18.

Functionally, this is one of the proteins that binds to the 5S RNA in the ribosome where it forms part of the central protuberance. The chain is Large ribosomal subunit protein bL25 from Campylobacter jejuni subsp. jejuni serotype O:6 (strain 81116 / NCTC 11828).